The primary structure comprises 129 residues: MEKIMKKLTLALVLGSALVVTGCFDKQEAKQKVEDTKQTVASVASETKDAAANTMTEVKEKAQQLSTDVKNKVAEKVEDAKEVIKSATEAASEKVGEMKEAASEKASEMKEAVSEKATQAVDAVKEATK.

Residues 91–114 (ASEKVGEMKEAASEKASEMKEAVS) are compositionally biased toward basic and acidic residues. The tract at residues 91-129 (ASEKVGEMKEAASEKASEMKEAVSEKATQAVDAVKEATK) is disordered.

This sequence belongs to the LEA type 1 family.

This is an uncharacterized protein from Haemophilus influenzae (strain ATCC 51907 / DSM 11121 / KW20 / Rd).